A 239-amino-acid chain; its full sequence is Elongation factor Ts (239 aa).

The tract at residues 82–85 (TDFV) is involved in Mg(2+) ion dislocation from EF-Tu. The tract at residues 213–239 (AAQTKPKAEEKPAAKKATSKKKKGKKK) is disordered. Basic residues predominate over residues 229 to 239 (ATSKKKKGKKK).

Belongs to the EF-Ts family.

The protein resides in the cytoplasm. Associates with the EF-Tu.GDP complex and induces the exchange of GDP to GTP. It remains bound to the aminoacyl-tRNA.EF-Tu.GTP complex up to the GTP hydrolysis stage on the ribosome. This Acaryochloris marina (strain MBIC 11017) protein is Elongation factor Ts.